A 507-amino-acid chain; its full sequence is Beta-glucosidase 3 (507 aa).

Residues 1–23 form the signal peptide; the sequence is MELTLSLLTIFLLFFALSGRCSD. Q41 is a binding site for a beta-D-glucoside. N64 is a glycosylation site (N-linked (GlcNAc...) asparagine). A beta-D-glucoside contacts are provided by residues H138 and 183–184; that span reads NE. E184 serves as the catalytic Proton donor. C203 and C210 are oxidised to a cystine. N-linked (GlcNAc...) asparagine glycans are attached at residues N209 and N214. Y326 lines the a beta-D-glucoside pocket. Residue N361 is glycosylated (N-linked (GlcNAc...) asparagine). A beta-D-glucoside is bound at residue E394. The active-site Nucleophile is E394. N429 carries an N-linked (GlcNAc...) asparagine glycan. Residues W439 and F455 each contribute to the a beta-D-glucoside site. N461, N485, and N500 each carry an N-linked (GlcNAc...) asparagine glycan.

It belongs to the glycosyl hydrolase 1 family.

The catalysed reaction is Hydrolysis of terminal, non-reducing beta-D-glucosyl residues with release of beta-D-glucose.. In Arabidopsis thaliana (Mouse-ear cress), this protein is Beta-glucosidase 3.